A 235-amino-acid chain; its full sequence is Uridylate kinase (235 aa).

9 to 12 (KISG) contributes to the ATP binding site. Gly50 contributes to the UMP binding site. Residues Gly51 and Arg55 each coordinate ATP. UMP contacts are provided by residues Asp70 and 131-138 (TGFPYFTT). Asn159, Tyr165, and Asp168 together coordinate ATP.

This sequence belongs to the UMP kinase family. Homohexamer; trimer of dimers.

It localises to the cytoplasm. The catalysed reaction is UMP + ATP = UDP + ADP. It participates in pyrimidine metabolism; CTP biosynthesis via de novo pathway; UDP from UMP (UMPK route): step 1/1. Unlike other bacteria, is not activated by GTP. UTP is a competitive inhibitor against UMP and a non-competitive inhibitor toward ATP. Its function is as follows. Catalyzes the reversible phosphorylation of UMP to UDP, with ATP as the most efficient phosphate donor. Is also able to phosphorylate dUMP. The polypeptide is Uridylate kinase (pyrH) (Ureaplasma parvum serovar 3 (strain ATCC 700970)).